Reading from the N-terminus, the 101-residue chain is RNA-binding protein Hfq (101 aa).

The Sm domain occupies 9–68 (DPFLNALRRERVPVSIYLVNGIKLQGQVESFDQFVILLKNTVSQMVYKHAISTVVPSRPV). The segment at 63–101 (VPSRPVSHHSNNPSGSTNNYHGSNPSAPQQPQQDSDDAE) is disordered. Residues 70-86 (HHSNNPSGSTNNYHGSN) are compositionally biased toward polar residues.

The protein belongs to the Hfq family. Homohexamer.

Its function is as follows. RNA chaperone that binds small regulatory RNA (sRNAs) and mRNAs to facilitate mRNA translational regulation in response to envelope stress, environmental stress and changes in metabolite concentrations. Also binds with high specificity to tRNAs. Positively regulates the expression of the yst gene for heat-stable enterotoxin (Y-ST). This chain is RNA-binding protein Hfq, found in Yersinia enterocolitica.